The primary structure comprises 502 residues: Type-2 serine--tRNA ligase (502 aa).

Position 304 (Ala304) interacts with L-serine. Zn(2+) is bound at residue Cys306. Position 336 (Arg336) interacts with L-serine. Residues 336 to 338 (RYE) and 347 to 348 (RV) contribute to the ATP site. Residues 353–355 (RVE) and Gln400 contribute to the L-serine site. Residue Glu355 participates in Zn(2+) binding. Glu432 serves as a coordination point for ATP. L-serine is bound at residue Asn435. Cys461 is a binding site for Zn(2+). Arg468 contributes to the ATP binding site.

The protein belongs to the class-II aminoacyl-tRNA synthetase family. Type-2 seryl-tRNA synthetase subfamily. In terms of assembly, homodimer. The cofactor is Zn(2+).

It is found in the cytoplasm. It catalyses the reaction tRNA(Ser) + L-serine + ATP = L-seryl-tRNA(Ser) + AMP + diphosphate + H(+). The enzyme catalyses tRNA(Sec) + L-serine + ATP = L-seryl-tRNA(Sec) + AMP + diphosphate + H(+). Its pathway is aminoacyl-tRNA biosynthesis; selenocysteinyl-tRNA(Sec) biosynthesis; L-seryl-tRNA(Sec) from L-serine and tRNA(Sec): step 1/1. Functionally, catalyzes the attachment of serine to tRNA(Ser). Is also able to aminoacylate tRNA(Sec) with serine, to form the misacylated tRNA L-seryl-tRNA(Sec), which will be further converted into selenocysteinyl-tRNA(Sec). This Methanococcoides burtonii (strain DSM 6242 / NBRC 107633 / OCM 468 / ACE-M) protein is Type-2 serine--tRNA ligase.